The following is a 370-amino-acid chain: uncharacterized protein (370 aa).

Met-1 is modified (N-acetylmethionine).

The protein belongs to the ornithine cyclodeaminase/mu-crystallin family.

This is an uncharacterized protein from Saccharomyces cerevisiae (strain ATCC 204508 / S288c) (Baker's yeast).